The following is a 348-amino-acid chain: Inactive rhomboid-related protein 2 (348 aa).

The 36-residue stretch at 14 to 49 (IEASSWIRIFRAFDTDHDGLIQCEEMQKTIRDSTYS) folds into the EF-hand domain. Ca(2+) contacts are provided by Asp-27, Asp-29, Asp-31, and Glu-38. 7 helical membrane passes run 121 to 141 (PPIF…YYVV), 177 to 197 (LINV…AIGV), 207 to 227 (IYIL…ALDP), 229 to 249 (VFLC…ITTI), 263 to 283 (LPIL…QRFF), 290 to 310 (VSMY…FILF), and 323 to 343 (FWVS…LIAA).

This sequence belongs to the peptidase S54 family.

It is found in the membrane. Functionally, probable inactive serine protease. The sequence is that of Inactive rhomboid-related protein 2 from Caenorhabditis elegans.